A 403-amino-acid chain; its full sequence is Imidazolonepropionase (403 aa).

Residues histidine 69 and histidine 71 each contribute to the Fe(3+) site. 2 residues coordinate Zn(2+): histidine 69 and histidine 71. 4-imidazolone-5-propanoate-binding residues include arginine 78, tyrosine 141, and histidine 174. Tyrosine 141 contributes to the N-formimidoyl-L-glutamate binding site. Histidine 239 serves as a coordination point for Fe(3+). Position 239 (histidine 239) interacts with Zn(2+). A 4-imidazolone-5-propanoate-binding site is contributed by glutamine 242. A Fe(3+)-binding site is contributed by aspartate 314. Zn(2+) is bound at residue aspartate 314. 2 residues coordinate N-formimidoyl-L-glutamate: asparagine 316 and glycine 318. Serine 319 provides a ligand contact to 4-imidazolone-5-propanoate.

Belongs to the metallo-dependent hydrolases superfamily. HutI family. Requires Zn(2+) as cofactor. Fe(3+) serves as cofactor.

It is found in the cytoplasm. The enzyme catalyses 4-imidazolone-5-propanoate + H2O = N-formimidoyl-L-glutamate. It participates in amino-acid degradation; L-histidine degradation into L-glutamate; N-formimidoyl-L-glutamate from L-histidine: step 3/3. Its function is as follows. Catalyzes the hydrolytic cleavage of the carbon-nitrogen bond in imidazolone-5-propanoate to yield N-formimidoyl-L-glutamate. It is the third step in the universal histidine degradation pathway. The sequence is that of Imidazolonepropionase from Legionella pneumophila (strain Lens).